A 538-amino-acid polypeptide reads, in one-letter code: Prickle planar cell polarity protein 3-A (538 aa).

The 110-residue stretch at 66–175 (SGSQRDSLCE…CVRPVSGTMS (110 aa)) folds into the PET domain. 3 LIM zinc-binding domains span residues 177–241 (TVCQ…ELKR), 242–302 (PRCL…LYAQ), and 305–366 (DSCG…NATP). Residues 369 to 378 (SFSPSQTDLS) are compositionally biased toward polar residues. 3 disordered regions span residues 369 to 398 (SFSP…DGDS), 433 to 463 (RGAP…TRVT), and 475 to 538 (SVSL…CLLS). Residues 435-449 (APKEFSRECPNRRSL) are compositionally biased toward basic and acidic residues. Residues 451–463 (DLNSHTRTPTRVT) show a composition bias toward polar residues. Low complexity-rich tracts occupy residues 475 to 488 (SVSL…SSSS) and 514 to 523 (APPTHAPTST).

Belongs to the prickle / espinas / testin family. Interacts with vangl2 via its C-terminus. The vangl2-dependent membrane recruitment of prickle3 is a prerequisite for its polarization. Interacts with wtip. Wtip is involved in the recruitment of prickle3 to the basal body. In terms of tissue distribution, predominantly expressed in the epidermal ectoderm.

Its subcellular location is the cytoplasm. The protein resides in the cell membrane. The protein localises to the mitochondrion. Its function is as follows. Involved in the planar cell polarity (PCP) pathway that is essential for the polarization of epithelial cells during morphogenetic processes, including gastrulation and neurulation. PCP is maintained by two molecular modules, the global and the core modules. Proteins of the core module include the proteins Frizzled (Fz), Disheveled (Dsh), Van Gogh (Vang), Prickle (Pk), Flamingo (Fmi, Celsr) and Diego (Dgo). The core module proteins develop subcellular asymmetry, accumulating in two groups on opposite sides of epithelial cells. Distinct proximal (Vang, Pk and Fmi) and distal (Fz, Dsh, Dgo and Fmi) complexes segregate to opposite sides of the cell, where they interact with the opposite complex in the neighboring cell at or near the adherents junctions. Directional information to orient polarization with respect to the tissue axes is provided by the global module which involves Wnt proteins. Involved in the organization of the basal body. Involved in cilia growth and positioning. Required for proper assembly, stability, and function of mitochondrial membrane ATP synthase (mitochondrial complex V). The chain is Prickle planar cell polarity protein 3-A (prickle3-a) from Xenopus laevis (African clawed frog).